We begin with the raw amino-acid sequence, 275 residues long: MEPSLLMWRFFVFIVVPGCVTEACHDDPPSLRNAMFKVLRYEVGTMINCDCKAGFRRVSAVMRCVGDSSHSAWNNRCFCNSTSPAKNPVKPVTPGSEEQRERKPTDAQSQTQPPEQADLPGHCEEPPPWEHEREPLKRVYHFTLGQTVHYQCAQGFRALHTGPAESTCTMIHGEMRWTRPRLKCISEGANSQAPDEAEPPESTEAPPGSGTFLTTRMAGTTDFQKPTDVVATLDTFIFTTEYQIAVAGCILLLSSILLLSCLTWQRRWKKNRRTI.

The N-terminal stretch at 1–21 is a signal peptide; it reads MEPSLLMWRFFVFIVVPGCVT. Sushi domains lie at 22–81 and 121–186; these read EACH…FCNS and GHCE…KCIS. The Extracellular portion of the chain corresponds to 22 to 243; sequence EACHDDPPSL…DTFIFTTEYQ (222 aa). 3 cysteine pairs are disulfide-bonded: C24–C64, C49–C77, and C51–C79. N-linked (GlcNAc...) asparagine glycosylation is present at N80. A disordered region spans residues 86 to 130; sequence KNPVKPVTPGSEEQRERKPTDAQSQTQPPEQADLPGHCEEPPPWE. A compositionally biased stretch (basic and acidic residues) spans 121-130; sequence GHCEEPPPWE. Intrachain disulfides connect C123-C168 and C152-C184. Residues 188–213 form a disordered region; that stretch reads GANSQAPDEAEPPESTEAPPGSGTFL. Residues 244-262 traverse the membrane as a helical segment; that stretch reads IAVAGCILLLSSILLLSCL. The Cytoplasmic portion of the chain corresponds to 263–275; the sequence is TWQRRWKKNRRTI.

As to quaternary structure, non-covalent dimer of an alpha and a beta subunit. IL2R exists in 3 different forms: a high affinity dimer, an intermediate affinity monomer (beta subunit), and a low affinity monomer (alpha subunit). The high and intermediate affinity forms also associate with a gamma subunit.

It localises to the membrane. Its function is as follows. Receptor for interleukin-2. The receptor is involved in the regulation of immune tolerance by controlling regulatory T cells (TREGs) activity. TREGs suppress the activation and expansion of autoreactive T-cells. This Ovis aries (Sheep) protein is Interleukin-2 receptor subunit alpha (IL2RA).